A 95-amino-acid chain; its full sequence is Protein TusB (95 aa).

The protein belongs to the DsrH/TusB family. Heterohexamer, formed by a dimer of trimers. The hexameric TusBCD complex contains 2 copies each of TusB, TusC and TusD. The TusBCD complex interacts with TusE.

Its subcellular location is the cytoplasm. In terms of biological role, part of a sulfur-relay system required for 2-thiolation of 5-methylaminomethyl-2-thiouridine (mnm(5)s(2)U) at tRNA wobble positions. This chain is Protein TusB, found in Escherichia coli O45:K1 (strain S88 / ExPEC).